Consider the following 431-residue polypeptide: Nocturnin (431 aa).

The transit peptide at 1-75 directs the protein to the mitochondrion; sequence MFHSPRRLCS…SMGTGTSRLY (75 aa). Residues 20 to 31 show a composition bias toward low complexity; it reads LRRLPAPGLRRP. Positions 20-41 are disordered; it reads LRRLPAPGLRRPLSPPAAVPRP. Positions 32-41 are enriched in pro residues; that stretch reads LSPPAAVPRP. Glutamate 195 contacts Mg(2+). Residues glutamate 195, 219 to 221, asparagine 263, 286 to 289, and 324 to 326 each bind substrate; these read KPW, HLKA, and DFN. The interval 343–353 is interaction with PPARG; it reads NLNSAYKLLSA. Histidine 414 contacts substrate.

Belongs to the CCR4/nocturin family. Interacts with PPARG. It depends on Mg(2+) as a cofactor. As to expression, adipose tissue. Expression is higher in subcutaneous adipose tissue as compared to visceral adipose tissue.

The protein localises to the cytoplasm. The protein resides in the nucleus. It localises to the perinuclear region. Its subcellular location is the mitochondrion. It catalyses the reaction NADP(+) + H2O = phosphate + NAD(+). The catalysed reaction is NADPH + H2O = phosphate + NADH. In terms of biological role, phosphatase which catalyzes the conversion of NADP(+) to NAD(+) and of NADPH to NADH. Shows a small preference for NADPH over NADP(+). Represses translation and promotes degradation of target mRNA molecules. Plays an important role in post-transcriptional regulation of metabolic genes under circadian control. Exerts a rhythmic post-transcriptional control of genes necessary for metabolic functions including nutrient absorption, glucose/insulin sensitivity, lipid metabolism, adipogenesis, inflammation and osteogenesis. Plays an important role in favoring adipogenesis over osteoblastogenesis and acts as a key regulator of the adipogenesis/osteogenesis balance. Promotes adipogenesis by facilitating PPARG nuclear translocation which activates its transcriptional activity. Regulates circadian expression of NOS2 in the liver and negatively regulates the circadian expression of IGF1 in the bone. Critical for proper development of early embryos. The polypeptide is Nocturnin (Homo sapiens (Human)).